A 304-amino-acid polypeptide reads, in one-letter code: tRNA pseudouridine synthase B (304 aa).

The active-site Nucleophile is the Asp-38.

This sequence belongs to the pseudouridine synthase TruB family. Type 1 subfamily.

It catalyses the reaction uridine(55) in tRNA = pseudouridine(55) in tRNA. Responsible for synthesis of pseudouridine from uracil-55 in the psi GC loop of transfer RNAs. The chain is tRNA pseudouridine synthase B from Listeria monocytogenes serovar 1/2a (strain ATCC BAA-679 / EGD-e).